The chain runs to 183 residues: Acireductone dioxygenase (183 aa).

H95, H97, E101, and H139 together coordinate Fe(2+). Residues H95, H97, E101, and H139 each coordinate Ni(2+).

It belongs to the acireductone dioxygenase (ARD) family. Monomer. The cofactor is Fe(2+). Requires Ni(2+) as cofactor.

The enzyme catalyses 1,2-dihydroxy-5-(methylsulfanyl)pent-1-en-3-one + O2 = 3-(methylsulfanyl)propanoate + CO + formate + 2 H(+). It carries out the reaction 1,2-dihydroxy-5-(methylsulfanyl)pent-1-en-3-one + O2 = 4-methylsulfanyl-2-oxobutanoate + formate + 2 H(+). Its pathway is amino-acid biosynthesis; L-methionine biosynthesis via salvage pathway; L-methionine from S-methyl-5-thio-alpha-D-ribose 1-phosphate: step 5/6. In terms of biological role, catalyzes 2 different reactions between oxygen and the acireductone 1,2-dihydroxy-3-keto-5-methylthiopentene (DHK-MTPene) depending upon the metal bound in the active site. Fe-containing acireductone dioxygenase (Fe-ARD) produces formate and 2-keto-4-methylthiobutyrate (KMTB), the alpha-ketoacid precursor of methionine in the methionine recycle pathway. Ni-containing acireductone dioxygenase (Ni-ARD) produces methylthiopropionate, carbon monoxide and formate, and does not lie on the methionine recycle pathway. The polypeptide is Acireductone dioxygenase (Hydrogenobaculum sp. (strain Y04AAS1)).